Consider the following 327-residue polypeptide: Methionine import ATP-binding protein MetN (327 aa).

Residues 3 to 239 (VELKNIEKIY…PKHAVTKELL (237 aa)) form the ABC transporter domain. Residue 36–43 (GYSGAGKS) coordinates ATP.

This sequence belongs to the ABC transporter superfamily. Methionine importer (TC 3.A.1.24) family. In terms of assembly, the complex is composed of two ATP-binding proteins (MetN), two transmembrane proteins (MetI) and a solute-binding protein (MetQ).

Its subcellular location is the cell inner membrane. The enzyme catalyses L-methionine(out) + ATP + H2O = L-methionine(in) + ADP + phosphate + H(+). The catalysed reaction is D-methionine(out) + ATP + H2O = D-methionine(in) + ADP + phosphate + H(+). Functionally, part of the ABC transporter complex MetNIQ involved in methionine import. Responsible for energy coupling to the transport system. The chain is Methionine import ATP-binding protein MetN from Helicobacter pylori (strain J99 / ATCC 700824) (Campylobacter pylori J99).